Consider the following 88-residue polypeptide: Putative membrane protein insertion efficiency factor (88 aa).

Belongs to the UPF0161 family.

The protein resides in the cell inner membrane. Its function is as follows. Could be involved in insertion of integral membrane proteins into the membrane. This chain is Putative membrane protein insertion efficiency factor, found in Coxiella burnetii (strain Dugway 5J108-111).